A 106-amino-acid chain; its full sequence is UPF0145 protein BH0643 (106 aa).

This sequence belongs to the UPF0145 family.

This chain is UPF0145 protein BH0643, found in Halalkalibacterium halodurans (strain ATCC BAA-125 / DSM 18197 / FERM 7344 / JCM 9153 / C-125) (Bacillus halodurans).